A 275-amino-acid polypeptide reads, in one-letter code: Formamidopyrimidine-DNA glycosylase (275 aa).

Catalysis depends on Pro-2, which acts as the Schiff-base intermediate with DNA. The active-site Proton donor is the Glu-3. Catalysis depends on Lys-58, which acts as the Proton donor; for beta-elimination activity. His-89, Arg-108, and Lys-151 together coordinate DNA. The FPG-type; degenerate zinc finger occupies 236–275; that stretch reads KVYDRAGQPCERCPGPAACAGISRTVQSGRATYFCARTQK. Arg-265 serves as the catalytic Proton donor; for delta-elimination activity.

Belongs to the FPG family. In terms of assembly, monomer. It depends on Zn(2+) as a cofactor.

The catalysed reaction is Hydrolysis of DNA containing ring-opened 7-methylguanine residues, releasing 2,6-diamino-4-hydroxy-5-(N-methyl)formamidopyrimidine.. The enzyme catalyses 2'-deoxyribonucleotide-(2'-deoxyribose 5'-phosphate)-2'-deoxyribonucleotide-DNA = a 3'-end 2'-deoxyribonucleotide-(2,3-dehydro-2,3-deoxyribose 5'-phosphate)-DNA + a 5'-end 5'-phospho-2'-deoxyribonucleoside-DNA + H(+). Its function is as follows. Involved in base excision repair of DNA damaged by oxidation or by mutagenic agents. Acts as a DNA glycosylase that recognizes and removes damaged bases. Has a preference for oxidized purines, such as 7,8-dihydro-8-oxoguanine (8-oxoG). Has AP (apurinic/apyrimidinic) lyase activity and introduces nicks in the DNA strand. Cleaves the DNA backbone by beta-delta elimination to generate a single-strand break at the site of the removed base with both 3'- and 5'-phosphates. In Acidiphilium cryptum (strain JF-5), this protein is Formamidopyrimidine-DNA glycosylase.